The chain runs to 75 residues: Mating pheromone Er-10 (75 aa).

A signal peptide spans 1–19; it reads MNKLAILAIIAMVLFSANA. Positions 20–37 are excised as a propeptide; that stretch reads FRFQSRIRSNVEAKTETR. Cystine bridges form between Cys-40–Cys-56, Cys-47–Cys-74, and Cys-52–Cys-64.

In terms of assembly, homodimer.

The protein resides in the secreted. Functionally, mating ciliate pheromones (or gamones) are diffusible extracellular communication signals that distinguish different intraspecific classes of cells commonly referred to as 'mating types'. They prepare the latter for conjugation by changing their cell surface properties. In Euplotes raikovi, this protein is Mating pheromone Er-10 (MAT10).